We begin with the raw amino-acid sequence, 217 residues long: Small ribosomal subunit protein uS3 (217 aa).

Residues 38–106 enclose the KH type-2 domain; sequence IRKFIDNELK…KVHINVIEIK (69 aa).

Belongs to the universal ribosomal protein uS3 family. In terms of assembly, part of the 30S ribosomal subunit. Forms a tight complex with proteins S10 and S14.

Binds the lower part of the 30S subunit head. Binds mRNA in the 70S ribosome, positioning it for translation. The chain is Small ribosomal subunit protein uS3 from Staphylococcus aureus (strain MSSA476).